The chain runs to 446 residues: Tubulin beta-6 chain (446 aa).

The MREI motif motif lies at 1 to 4 (MREI). 6 residues coordinate GTP: glutamine 11, glutamate 69, serine 138, glycine 142, threonine 143, and glycine 144. Glutamate 69 provides a ligand contact to Mg(2+). A Phosphoserine; by CDK1 modification is found at serine 172. Positions 204 and 226 each coordinate GTP. A 5-glutamyl polyglutamate modification is found at glutamate 438.

The protein belongs to the tubulin family. Dimer of alpha and beta chains. A typical microtubule is a hollow water-filled tube with an outer diameter of 25 nm and an inner diameter of 15 nM. Alpha-beta heterodimers associate head-to-tail to form protofilaments running lengthwise along the microtubule wall with the beta-tubulin subunit facing the microtubule plus end conferring a structural polarity. Microtubules usually have 13 protofilaments but different protofilament numbers can be found in some organisms and specialized cells. It depends on Mg(2+) as a cofactor. Some glutamate residues at the C-terminus are polyglutamylated, resulting in polyglutamate chains on the gamma-carboxyl group. Polyglutamylation plays a key role in microtubule severing by spastin (SPAST). SPAST preferentially recognizes and acts on microtubules decorated with short polyglutamate tails: severing activity by SPAST increases as the number of glutamates per tubulin rises from one to eight, but decreases beyond this glutamylation threshold. Glutamylation is also involved in cilia motility. Post-translationally, some glutamate residues at the C-terminus are monoglycylated but not polyglycylated due to the absence of functional TTLL10 in human. Monoglycylation is mainly limited to tubulin incorporated into cilia and flagella axonemes, which is required for their stability and maintenance. Flagella glycylation controls sperm motility. Both polyglutamylation and monoglycylation can coexist on the same protein on adjacent residues, and lowering glycylation levels increases polyglutamylation, and reciprocally. In terms of processing, phosphorylated on Ser-172 by CDK1 during the cell cycle, from metaphase to telophase, but not in interphase. This phosphorylation inhibits tubulin incorporation into microtubules. In terms of tissue distribution, ubiquitous. Maximal expression in breast and lung, where it represents around 10% of all beta-tubulins. Largely decreased expression in most cancerous tissues.

The protein resides in the cytoplasm. Its subcellular location is the cytoskeleton. In terms of biological role, tubulin is the major constituent of microtubules, a cylinder consisting of laterally associated linear protofilaments composed of alpha- and beta-tubulin heterodimers. Microtubules grow by the addition of GTP-tubulin dimers to the microtubule end, where a stabilizing cap forms. Below the cap, tubulin dimers are in GDP-bound state, owing to GTPase activity of alpha-tubulin. In Homo sapiens (Human), this protein is Tubulin beta-6 chain (TUBB6).